The following is a 50-amino-acid chain: Bacteriocin BacSp222 (50 aa).

At Met-1 the chain carries N-formylmethionine.

It localises to the secreted. Functionally, has bacteriolytic activity against Gram-positive bacteria B.subtilis, L.lactis and M.luteus and several species from genus Staphylococcus including methicillin-resistant S.aureus, with MIC values ranging from 0.11 uM to 7.8 uM. Has no activity against Gram-negative bacteria or fungi. In vitro, has a dose-dependent cytolytic effect on eukaryotic cells. This is Bacteriocin BacSp222 from Staphylococcus pseudintermedius.